A 120-amino-acid chain; its full sequence is Nitrogen regulatory protein GlnK3 (120 aa).

Residues Thr40 and 48–50 (GEQ) each bind ADP. ATP contacts are provided by residues Thr40 and 48–50 (GEQ). 2-oxoglutarate is bound by residues 48–52 (GEQKG) and Lys69. ADP is bound by residues Val75 and 98–101 (GDGR). Residues Val75 and 98-101 (GDGR) each bind ATP. Gly98 contacts 2-oxoglutarate.

It belongs to the P(II) protein family. In terms of assembly, homotrimer. Interacts and forms a complex with Amt3.

Its subcellular location is the cytoplasm. Activity is influenced by intracellular pools of the effector molecules ATP, ADP and 2-oxoglutarate. It senses the cellular nitrogen status through 2-oxoglutarate, and the energy level of the cell by binding both ATP and ADP with different affinities. ATP and 2-oxoglutarate prohibit binding to Amt3. ADP promotes the complex formation. In terms of biological role, involved in the regulation of nitrogen metabolism. Regulates the activity of its targets by protein-protein interaction in response to the nitrogen status of the cell. Regulates the activity of the ammonia channel Amt3 via direct interaction. This chain is Nitrogen regulatory protein GlnK3, found in Archaeoglobus fulgidus (strain ATCC 49558 / DSM 4304 / JCM 9628 / NBRC 100126 / VC-16).